The sequence spans 91 residues: UPF0250 protein BP0104 (91 aa).

The protein belongs to the UPF0250 family.

The sequence is that of UPF0250 protein BP0104 from Bordetella pertussis (strain Tohama I / ATCC BAA-589 / NCTC 13251).